A 788-amino-acid polypeptide reads, in one-letter code: Integrin beta-6 (788 aa).

The signal sequence occupies residues 1 to 21; it reads MGIELLCLFFLCLGRNDHVQG. Positions 22–71 constitute a PSI domain; it reads GCAVGGAETCEDCLLIGPQCAWCSQENFTHLSGVGERCDTPANLLAKGCQ. Residues 22 to 709 lie on the Extracellular side of the membrane; it reads GCAVGGAETC…KDCPKPPNIP (688 aa). Disulfide bonds link C23-C41, C31-C454, C34-C59, C44-C70, C197-C204, C252-C293, C394-C406, C426-C452, C456-C476, C467-C479, C481-C490, C492-C519, C502-C517, C511-C522, C524-C537, C539-C560, C544-C558, C552-C563, and C565-C574. Residues N48 and N97 are each glycosylated (N-linked (GlcNAc...) asparagine). Positions 131–371 constitute a VWFA domain; sequence YPVDLYYLMD…QLIISAYEEL (241 aa). 3 residues coordinate Mg(2+): D140, S142, and S144. Residues S144, D147, D148, and E179 each coordinate Ca(2+). Positions 235, 237, 239, and 240 each coordinate Ca(2+). A Mg(2+)-binding site is contributed by E240. N260 carries an N-linked (GlcNAc...) asparagine glycan. The Ca(2+) site is built by D271 and K355. N387 carries an N-linked (GlcNAc...) asparagine glycan. N418 carries N-linked (GlcNAc...) asparagine glycosylation. 4 I-EGF domains span residues 456-491, 492-538, 539-575, and 576-615; these read CQKE…HHCE, CGED…PYCQ, CDNF…EYCN, and CTTS…PTCE. N-linked (GlcNAc...) asparagine glycosylation is found at N463 and N471. A glycan (N-linked (GlcNAc...) asparagine) is linked at N541. N575 is a glycosylation site (N-linked (GlcNAc...) asparagine). 9 disulfide bridges follow: C576–C599, C583–C597, C591–C602, C604–C614, C617–C620, C624–C670, C630–C649, C633–C645, and C678–C702. A helical membrane pass occupies residues 710-730; it reads MIMLGVSLAILLIGVVLLCIW. The segment at 731–758 is interaction with HAX1; the sequence is KLLVSFHDRKEVAKFEAERSKAKWQTGT. The Cytoplasmic segment spans residues 731–788; it reads KLLVSFHDRKEVAKFEAERSKAKWQTGTNPLYRGSTSTFKNVTYKHKEKQKVDLSTDG.

This sequence belongs to the integrin beta chain family. In terms of assembly, heterodimer of an alpha and a beta subunit. Interacts with FLNB. Interacts with HAX1. ITGAV:ITGB6 interacts with FBN1. ITGAV:ITGB6 interacts with TGFB1.

Its subcellular location is the cell membrane. It localises to the cell junction. The protein resides in the focal adhesion. Integrin alpha-V:beta-6 (ITGAV:ITGB6) is a receptor for fibronectin and cytotactin. It recognizes the sequence R-G-D in its ligands. ITGAV:ITGB6 acts as a receptor for fibrillin-1 (FBN1) and mediates R-G-D-dependent cell adhesion to FBN1. Integrin alpha-V:beta-6 (ITGAV:ITGB6) mediates R-G-D-dependent release of transforming growth factor beta-1 (TGF-beta-1) from regulatory Latency-associated peptide (LAP), thereby playing a key role in TGF-beta-1 activation. The polypeptide is Integrin beta-6 (ITGB6) (Bos taurus (Bovine)).